The sequence spans 319 residues: 3-oxoacyl-[acyl-carrier-protein] reductase, chloroplastic (319 aa).

A chloroplast-targeting transit peptide spans 1 to 57 (MAAAVAAPRLISLKAVAKLGFREISQIRQLAPLHSAIPHFGMLRCRSRQPFSTSVVK). A58 bears the N-acetylalanine mark. 81-105 (ITGASRGIGKAIALALGKAGCKVLV) contacts NADP(+). A substrate-binding site is contributed by S213. Catalysis depends on Y226, which acts as the Proton acceptor.

This sequence belongs to the short-chain dehydrogenases/reductases (SDR) family. Homotetramer.

The protein resides in the plastid. It localises to the chloroplast. It carries out the reaction a (3R)-hydroxyacyl-[ACP] + NADP(+) = a 3-oxoacyl-[ACP] + NADPH + H(+). It functions in the pathway lipid metabolism; fatty acid biosynthesis. In Arabidopsis thaliana (Mouse-ear cress), this protein is 3-oxoacyl-[acyl-carrier-protein] reductase, chloroplastic.